Consider the following 712-residue polypeptide: 1,4-alpha-glucan branching enzyme GlgB (712 aa).

Asp397 functions as the Nucleophile in the catalytic mechanism. Residue Glu450 is the Proton donor of the active site.

Belongs to the glycosyl hydrolase 13 family. GlgB subfamily. Monomer.

The catalysed reaction is Transfers a segment of a (1-&gt;4)-alpha-D-glucan chain to a primary hydroxy group in a similar glucan chain.. It participates in glycan biosynthesis; glycogen biosynthesis. Functionally, catalyzes the formation of the alpha-1,6-glucosidic linkages in glycogen by scission of a 1,4-alpha-linked oligosaccharide from growing alpha-1,4-glucan chains and the subsequent attachment of the oligosaccharide to the alpha-1,6 position. This is 1,4-alpha-glucan branching enzyme GlgB from Bradyrhizobium sp. (strain ORS 278).